The following is a 196-amino-acid chain: ATP-dependent Clp protease proteolytic subunit (196 aa).

The active-site Nucleophile is Ser96. His121 is an active-site residue.

The protein belongs to the peptidase S14 family. As to quaternary structure, fourteen ClpP subunits assemble into 2 heptameric rings which stack back to back to give a disk-like structure with a central cavity, resembling the structure of eukaryotic proteasomes.

The protein resides in the cytoplasm. It catalyses the reaction Hydrolysis of proteins to small peptides in the presence of ATP and magnesium. alpha-casein is the usual test substrate. In the absence of ATP, only oligopeptides shorter than five residues are hydrolyzed (such as succinyl-Leu-Tyr-|-NHMec, and Leu-Tyr-Leu-|-Tyr-Trp, in which cleavage of the -Tyr-|-Leu- and -Tyr-|-Trp bonds also occurs).. Its function is as follows. Cleaves peptides in various proteins in a process that requires ATP hydrolysis. Has a chymotrypsin-like activity. Plays a major role in the degradation of misfolded proteins. The sequence is that of ATP-dependent Clp protease proteolytic subunit from Streptococcus gordonii (strain Challis / ATCC 35105 / BCRC 15272 / CH1 / DL1 / V288).